Reading from the N-terminus, the 300-residue chain is MTLTENVMKPQIQRFTRDHDPKVLWQVVEEDGAVIIEGFLPHEVIQKFDCELDVRSKATKGGEMNQEFYQMPVPTTTKWMNDLTATCPTFRHEILNNDILHSLCNVAFEPHGDYWLLNGMAMEMMPGNPTQQIHNDHGTHPILQYLRPDAPAPVFSIITAVTEFTESNGATRVILGSHRWPQGQKAKDDQAVRAALQPGDALVMHRSTKHGGAAHDADNQDHRRLLLTCMGTCQLAPYETNVTVPRPIVESMTPLAQKMIGWRSTRPVISNVTGLNTVRMKHLENQIELKSNVPLNVGGC.

Residues His134, Asp136, and His210 each coordinate Fe cation.

This sequence belongs to the PhyH family. Homodimer. It depends on Fe cation as a cofactor.

The catalysed reaction is okaramine A + 2-oxoglutarate + AH2 + O2 = 12-deshydroxyl okaramine E + succinate + A + CO2 + H2O. The enzyme catalyses 12-deshydroxyl okaramine E + 2-oxoglutarate + O2 = okaramine E + succinate + CO2. It catalyses the reaction okaramine A + 2-oxoglutarate + O2 = okaramine E + succinate + CO2. It functions in the pathway alkaloid biosynthesis. It participates in secondary metabolite biosynthesis; terpenoid biosynthesis. Functionally, iron/alpha-ketoglutarate-dependent dioxygenase; part of the gene cluster that mediates the biosynthesis of okaramine B, a prenylated indole alkaloid that possesses an unusual octacyclic ring system, including a four-membered azetidine ring and an eight-membered azocine ring, and that exhibits insecticidal activity against silkworm larvae. Within the pathway, okaE forms the unusual 2-dimethyl-3-methyl-azetidine ring to yield 12-deshydroxyl okaramine E from okaramine A. OkaE also catalyzes the hydroxylation of 12-deshydroxyl okaramine E to produce okaramine E. The biosynthesis begins with the NRPS okaA that condenses two tryptophan molecules into cyclo(L-Trp-L-Trp). Prenylation by the prenyltransferase okaC then leads to the formation of cyclo(N8-(alpha,alpha-dimethylallyl)-L-Trp-6a-(alpha,alpha-dime-thylallyl)-L-Trp). This is followed by indole 2,3-epoxidation by the FAD-dependent monooxygenase okaB to facilitate the formation of the hexahydropyrrolo[2,3-b]indole (HPI) moiety of okaramine C. The cytochrome P450 monooxygenase okaD then likely catalyzes formation of the eight-membered ring of okaramine A. The dioxygenase okaE further forms the unusual 2-dimethyl-3-methyl-azetidine ring to yield 12-deshydroxyl okaramine E, as well as the hydroxylation of 12-deshydroxyl okaramine E to produce okaramine E. The cytochrome P450 monoxygenase okaG converts 12-deshydroxyl okaramine E into 3-desmethyl okaramine B which is further methylated by the methyltransferase okaF into okaramine B. In a shunt pathway, okaG and okaF together are also able to convert okaramine E into okaramine D. Okaramine H is produced by nonenzymatic conversion from okaramine A. This Penicillium ochrochloron protein is Iron/alpha-ketoglutarate-dependent dioxygenase okaE.